The sequence spans 322 residues: Transcription cofactor vestigial-like protein 2 (322 aa).

Over residues 42 to 61 (ASPGSSASGSSSFSNPTPAS) the composition is skewed to low complexity. Disordered regions lie at residues 42–75 (ASPGSSASGSSSFSNPTPASVKEEEGSPEKERPP) and 248–322 (PGRL…PTLG). The span at 62-75 (VKEEEGSPEKERPP) shows a compositional bias: basic and acidic residues. Low complexity-rich tracts occupy residues 248-258 (PGRLAPASAPA) and 270-283 (GEPAGSAWAAPGGP). Residues 312–322 (SAPPALYPTLG) are compositionally biased toward pro residues.

It belongs to the vestigial family. In terms of assembly, interacts with TEFs. Binds to TEAD1/TEF1. In terms of tissue distribution, skeletal muscle specific.

It is found in the nucleus. May act as a specific coactivator for the mammalian TEFs. May play a role in the development of skeletal muscles. This is Transcription cofactor vestigial-like protein 2 (Vgll2) from Mus musculus (Mouse).